We begin with the raw amino-acid sequence, 346 residues long: Anthranilate phosphoribosyltransferase (346 aa).

5-phospho-alpha-D-ribose 1-diphosphate is bound by residues Gly81, 84–85 (GD), 91–94 (NVST), 109–117 (KHGGRSVSS), and Ser121. Gly81 contributes to the anthranilate binding site. Ser93 serves as a coordination point for Mg(2+). Residue Arg167 participates in anthranilate binding. Mg(2+) contacts are provided by Asp226 and Glu227.

The protein belongs to the anthranilate phosphoribosyltransferase family. In terms of assembly, homodimer. Requires Mg(2+) as cofactor.

The enzyme catalyses N-(5-phospho-beta-D-ribosyl)anthranilate + diphosphate = 5-phospho-alpha-D-ribose 1-diphosphate + anthranilate. Its pathway is amino-acid biosynthesis; L-tryptophan biosynthesis; L-tryptophan from chorismate: step 2/5. Functionally, catalyzes the transfer of the phosphoribosyl group of 5-phosphorylribose-1-pyrophosphate (PRPP) to anthranilate to yield N-(5'-phosphoribosyl)-anthranilate (PRA). The polypeptide is Anthranilate phosphoribosyltransferase (Marinomonas sp. (strain MWYL1)).